The following is a 1031-amino-acid chain: Exportin-T (1031 aa).

This sequence belongs to the exportin family.

The protein resides in the nucleus. It is found in the cytoplasm. Its function is as follows. tRNA nucleus export receptor which facilitates tRNA translocation across the nuclear pore complex. Involved in pre-tRNA splicing, probably by affecting the interaction of pre-tRNA with splicing endonuclease. The sequence is that of Exportin-T (los1) from Emericella nidulans (strain FGSC A4 / ATCC 38163 / CBS 112.46 / NRRL 194 / M139) (Aspergillus nidulans).